Consider the following 341-residue polypeptide: HTH-type transcriptional repressor PurR (341 aa).

The HTH lacI-type domain occupies 2-56 (ATIKDVAKRANVSTTTVSHVINKTRFVAEETRNAVWAAIKELHYSPSAVARSLKV). Residues 4–23 (IKDVAKRANVSTTTVSHVIN) constitute a DNA-binding region (H-T-H motif). Residues 48 to 56 (SAVARSLKV) mediate DNA binding. Hypoxanthine-binding residues include Tyr-73, Arg-190, Thr-192, Phe-221, and Asp-275.

In terms of assembly, homodimer.

It participates in purine metabolism; purine nucleotide biosynthesis [regulation]. Functionally, is the main repressor of the genes involved in the de novo synthesis of purine nucleotides, regulating purB, purC, purEK, purF, purHD, purL, purMN and guaBA expression. PurR is allosterically activated to bind its cognate DNA by binding the purine corepressors, hypoxanthine or guanine, thereby effecting transcription repression. This is HTH-type transcriptional repressor PurR from Klebsiella pneumoniae subsp. pneumoniae (strain ATCC 700721 / MGH 78578).